Reading from the N-terminus, the 294-residue chain is Pantothenate synthetase 3 (294 aa).

31 to 38 (MGALHEGH) contacts ATP. H38 (proton donor) is an active-site residue. Residue Q62 coordinates (R)-pantoate. Q62 is a binding site for beta-alanine. 154–157 (GEKD) is a binding site for ATP. Q160 is a (R)-pantoate binding site. 191 to 194 (LSSR) lines the ATP pocket.

This sequence belongs to the pantothenate synthetase family. In terms of assembly, homodimer.

The protein resides in the cytoplasm. It carries out the reaction (R)-pantoate + beta-alanine + ATP = (R)-pantothenate + AMP + diphosphate + H(+). It functions in the pathway cofactor biosynthesis; (R)-pantothenate biosynthesis; (R)-pantothenate from (R)-pantoate and beta-alanine: step 1/1. Catalyzes the condensation of pantoate with beta-alanine in an ATP-dependent reaction via a pantoyl-adenylate intermediate. The chain is Pantothenate synthetase 3 from Frankia alni (strain DSM 45986 / CECT 9034 / ACN14a).